A 448-amino-acid chain; its full sequence is Solute carrier family 52, riboflavin transporter, member 2 (448 aa).

The next 5 membrane-spanning stretches (helical) occupy residues 14–34 (LLVA…WVEL), 47–67 (LPSY…VVTL), 79–99 (VPIQ…APLW), 105–125 (VAGQ…ALAC), and 147–167 (FFLG…VQGV). Residue N178 is glycosylated (N-linked (GlcNAc...) asparagine). The chain crosses the membrane as a helical span at residues 198–218 (WALTALLVTSAAAFQGLLLLL). The interval 228–267 (GAGPELPLGSPGAEEEEKEEEEALPLQEPPSQAAGTIPGP) is disordered. Positions 240 to 250 (AEEEEKEEEEA) are enriched in acidic residues. 5 consecutive transmembrane segments (helical) span residues 280–300 (AFLL…LPAV), 315–335 (LAVV…MGVL), 342–362 (LVGL…LAIL), 369–389 (VGTT…LCVF), and 407–427 (ALLA…GTMF).

The protein belongs to the riboflavin transporter family.

It is found in the cell membrane. It carries out the reaction riboflavin(in) = riboflavin(out). With respect to regulation, riboflavin transport is Na(+)-independent but moderately pH-sensitive. Activity is strongly inhibited by riboflavin analogs, such as lumiflavin. Weakly inhibited by flavin adenine dinucleotide (FAD) and flavin mononucleotide (FMN). In terms of biological role, plasma membrane transporter mediating the uptake by cells of the water soluble vitamin B2/riboflavin that plays a key role in biochemical oxidation-reduction reactions of the carbohydrate, lipid, and amino acid metabolism. May also act as a receptor for 4-hydroxybutyrate. Functionally, (Microbial infection) In case of infection by retroviruses, acts as a cell receptor to retroviral envelopes similar to the porcine endogenous retrovirus (PERV-A). This Papio hamadryas (Hamadryas baboon) protein is Solute carrier family 52, riboflavin transporter, member 2 (SLC52A2).